The primary structure comprises 227 residues: Uridylate kinase (227 aa).

11–12 (GS) lines the ATP pocket. Glycine 45 provides a ligand contact to UMP. ATP is bound by residues glycine 46 and arginine 50. Residues aspartate 67 and 114-120 (TEPGHTT) contribute to the UMP site. ATP contacts are provided by threonine 140, tyrosine 146, and aspartate 149.

This sequence belongs to the UMP kinase family. As to quaternary structure, homohexamer.

It is found in the cytoplasm. It carries out the reaction UMP + ATP = UDP + ADP. It participates in pyrimidine metabolism; CTP biosynthesis via de novo pathway; UDP from UMP (UMPK route): step 1/1. With respect to regulation, inhibited by UTP. In terms of biological role, catalyzes the reversible phosphorylation of UMP to UDP. The protein is Uridylate kinase of Thermoplasma volcanium (strain ATCC 51530 / DSM 4299 / JCM 9571 / NBRC 15438 / GSS1).